Consider the following 304-residue polypeptide: N-acetyl-D-glucosamine kinase (304 aa).

ATP-binding positions include G4–K11 and G133–V140. Positions 157, 177, 179, and 184 each coordinate Zn(2+).

Belongs to the ROK (NagC/XylR) family. NagK subfamily.

It catalyses the reaction N-acetyl-D-glucosamine + ATP = N-acetyl-D-glucosamine 6-phosphate + ADP + H(+). Its pathway is cell wall biogenesis; peptidoglycan recycling. Catalyzes the phosphorylation of N-acetyl-D-glucosamine (GlcNAc) derived from cell-wall degradation, yielding GlcNAc-6-P. The polypeptide is N-acetyl-D-glucosamine kinase (Yersinia pseudotuberculosis serotype O:3 (strain YPIII)).